Consider the following 317-residue polypeptide: Anamorsin homolog 2 (317 aa).

Residues 1 to 162 form an N-terminal SAM-like domain region; that stretch reads MAKKVGVLLF…KPSWDSASVF (162 aa). Residues 163-229 are linker; sequence QLRKGSSQKG…EDDLLTEEDL (67 aa). Positions 240, 247, 250, and 252 each coordinate [2Fe-2S] cluster. A fe-S binding site A region spans residues 240–252; it reads CAPTKKACKNCTC. [4Fe-4S] cluster is bound by residues Cys-278, Cys-281, Cys-289, and Cys-292. 2 short sequence motifs (cx2C motif) span residues 278–281 and 289–292; these read CGSC and CAGC. The segment at 278–292 is fe-S binding site B; the sequence is CGSCGLGDAFRCAGC.

Belongs to the anamorsin family. As to quaternary structure, monomer. Requires [2Fe-2S] cluster as cofactor. [4Fe-4S] cluster is required as a cofactor.

Its subcellular location is the cytoplasm. It is found in the mitochondrion intermembrane space. Component of the cytosolic iron-sulfur (Fe-S) protein assembly (CIA) machinery. Required for the maturation of extramitochondrial Fe-S proteins. Part of an electron transfer chain functioning in an early step of cytosolic Fe-S biogenesis, facilitating the de novo assembly of a [4Fe-4S] cluster on the cytosolic Fe-S scaffold complex. Electrons are transferred from NADPH via a FAD- and FMN-containing diflavin oxidoreductase. Together with the diflavin oxidoreductase, also required for the assembly of the diferric tyrosyl radical cofactor of ribonucleotide reductase (RNR), probably by providing electrons for reduction during radical cofactor maturation in the catalytic small subunit. The chain is Anamorsin homolog 2 from Physcomitrium patens (Spreading-leaved earth moss).